A 1456-amino-acid chain; its full sequence is ABC-type transporter eriD (1456 aa).

The segment at 1–65 is disordered; it reads MAENEKVTYG…DPRMDPLSGK (65 aa). Residues 30 to 40 are compositionally biased toward polar residues; that stretch reads SMTNASRSSVY. The ABC transporter 1 domain maps to 118–372; sequence LDIPGLARDI…FIDMGFECPP (255 aa). Helical transmembrane passes span 481–501, 515–535, 561–581, 590–610, 623–643, and 734–754; these read NFLT…SIFY, ALLF…ILQI, VLCD…VLYF, GAFF…SMIF, AMAP…FTIP, and ILFG…EFIA. Residues 775–799 form a disordered region; sequence EGASEDEEAGTGSTGTRTQEEPVDK. The region spanning 813-1056 is the ABC transporter 2 domain; the sequence is FHWEDVIYDI…IIDYFEGQGA (244 aa). 849–856 is an ATP binding site; it reads GASGAGKT. Helical transmembrane passes span 1148–1168, 1184–1204, 1233–1253, 1269–1289, 1301–1321, 1337–1357, and 1423–1443; these read YIYS…FSFF, VFMG…HFVT, LPWN…PVGM, LMFL…HMLI, IASL…GPSG, PFTY…PAFC, and FGFL…FYWL.

It belongs to the ABC transporter superfamily. ABCG family. PDR (TC 3.A.1.205) subfamily.

Its subcellular location is the membrane. Its function is as follows. ABC-type transporter; part of the gene cluster that mediates the biosynthesis of erinacines, cyathane-xylosides that show unique biological activities, including leishmanicidal activity, stimulating activity for nerve growth-factor synthesis, and agonistic activity toward the kappa opioid receptor. In Hericium erinaceus (Lion's mane mushroom), this protein is ABC-type transporter eriD.